The following is a 173-amino-acid chain: MAEKRNIFLVGPMGAGKSTIGRQLAQQLNMEFFDSDQEIERRTGADVGWVFDVEGEEGFRDREEKVINELTEKQGIVLATGGGSVKSRETRNRLSARGVVVYLETTIEKQLARTQRDKKRPLLQVDSPPREVLEALAKERNPLYEEIADVTIRTDDQSAKVVANQIINMLESN.

An ATP-binding site is contributed by 14-19; the sequence is GAGKST. S18 is a binding site for Mg(2+). The substrate site is built by D36, R60, and G82. Position 120 (R120) interacts with ATP. R140 serves as a coordination point for substrate. Q157 serves as a coordination point for ATP.

It belongs to the shikimate kinase family. Monomer. The cofactor is Mg(2+).

Its subcellular location is the cytoplasm. The enzyme catalyses shikimate + ATP = 3-phosphoshikimate + ADP + H(+). It participates in metabolic intermediate biosynthesis; chorismate biosynthesis; chorismate from D-erythrose 4-phosphate and phosphoenolpyruvate: step 5/7. Its function is as follows. Catalyzes the specific phosphorylation of the 3-hydroxyl group of shikimic acid using ATP as a cosubstrate. This Serratia proteamaculans (strain 568) protein is Shikimate kinase 1.